The primary structure comprises 368 residues: Ribosomal RNA large subunit methyltransferase M (368 aa).

Residues Ser192, 225 to 228 (APGG), Asp244, Asp264, and Asp281 each bind S-adenosyl-L-methionine. The Proton acceptor role is filled by Lys310.

Belongs to the class I-like SAM-binding methyltransferase superfamily. RNA methyltransferase RlmE family. RlmM subfamily. Monomer.

It is found in the cytoplasm. It carries out the reaction cytidine(2498) in 23S rRNA + S-adenosyl-L-methionine = 2'-O-methylcytidine(2498) in 23S rRNA + S-adenosyl-L-homocysteine + H(+). Catalyzes the 2'-O-methylation at nucleotide C2498 in 23S rRNA. The protein is Ribosomal RNA large subunit methyltransferase M of Colwellia psychrerythraea (strain 34H / ATCC BAA-681) (Vibrio psychroerythus).